A 109-amino-acid chain; its full sequence is Parvalbumin beta (109 aa).

EF-hand domains follow at residues 38 to 73 (KSKD…FDGK) and 77 to 109 (LTDK…VTKG). Ca(2+) is bound by residues Asp51, Asp53, Ser55, Tyr57, Glu59, Glu62, Asp90, Asp92, Asp94, Lys96, and Glu101.

The protein belongs to the parvalbumin family.

Functionally, in muscle, parvalbumin is thought to be involved in relaxation after contraction. It binds two calcium ions. This Boa constrictor (Boa) protein is Parvalbumin beta.